Here is a 339-residue protein sequence, read N- to C-terminus: MKLAIVAGDGIGPEVVAQAVKVLDVVQPGVEKTNYDLGARRFHATGEILPDSVIAELREHDAILLGAIGDPSVPSGVLERGLLLRLRFELDHHINLRPGRLYPGVKSPLALEPGNPEIDFVVVREGTEGPYTGNGGAIRVGTANEVATEVSVNTAFGVRRVVRDAFERAMRRRKHLTLVHKNNVLTFAGSLWWRTVQEIGEEYPDVELAYQHVDAATIHMVTDPGRFDVIVTDNLFGDIITDLAAAVCGGIGLAASGNIDATRTNPSMFEPVHGSAPDIAGQGIADPTAAIMSVSLLLAHLGLDDAASRVDRAVEGYLATRGNERLATAAVGERIAAAL.

Substrate is bound by residues arginine 87, arginine 97, arginine 124, and aspartate 214. Aspartate 214, aspartate 238, and aspartate 242 together coordinate Mg(2+). Glycine 274–aspartate 286 is a binding site for NAD(+).

The protein belongs to the isocitrate and isopropylmalate dehydrogenases family. LeuB type 2 subfamily. Homodimer. Requires Mg(2+) as cofactor. Mn(2+) is required as a cofactor.

It localises to the cytoplasm. It catalyses the reaction (2R,3S)-3-isopropylmalate + NAD(+) = 4-methyl-2-oxopentanoate + CO2 + NADH. Its pathway is amino-acid biosynthesis; L-leucine biosynthesis; L-leucine from 3-methyl-2-oxobutanoate: step 3/4. Catalyzes the oxidation of 3-carboxy-2-hydroxy-4-methylpentanoate (3-isopropylmalate) to 3-carboxy-4-methyl-2-oxopentanoate. The product decarboxylates to 4-methyl-2 oxopentanoate. This Mycobacterium marinum (strain ATCC BAA-535 / M) protein is 3-isopropylmalate dehydrogenase.